A 558-amino-acid polypeptide reads, in one-letter code: MVYFKAGQPEHTPRTFPLQINRSFSDKHPKVAKALRITAIVLVSLSLIALVGCIAALSGGAVIPLAAIGGIAAVTGLLSSAIAIYSAKKALAHKKQKQLADSLPLDTGTEHVQYLTTNNFRGNNWDTLEKLVQQFSQLDLTVHPSEKELLKEVFGTEYKSINQTIESISNRFAKIRSLLYQREQLYKGEERYNRYLNTPLLRKNRILTQITSNMIRLLPRSGGVFSIKANTLSRTSHTLYTILKVSLSLGVIAAVASLVIFLPPSLPIIAALGLASLSLGIAAFLMARGIRYLLERSSINRKQLAEDIQKTIGPDVLNSMAYYQHQLLSHLHETLLDEAITTKWNQPIFLEHADLELKIGDLTKQYDILNSAFEQALRNDELLRAQLEKRAYRFGSSITDNDTDNDSGATESQQTDSENDGFQEILNKGIEAAKQRREKANQSGSNKEDMFSIWKPSKHLALEDLWRASEACTEEQLSILVDNCMSYKTLECQAALQKVRLQLQTAQRSLAALENRAENAYYESNLSMMDLARANQETYRLLNILSELQQLAQYVLDR.

A disordered region spans residues 396-420 (SSITDNDTDNDSGATESQQTDSEND). Positions 407–416 (SGATESQQTD) are enriched in polar residues.

Belongs to the chlamydial CPn_0065/CT_288/TC_0561 family.

This is an uncharacterized protein from Chlamydia muridarum (strain MoPn / Nigg).